We begin with the raw amino-acid sequence, 275 residues long: Large ribosomal subunit protein uL2 (275 aa).

Residues 221-275 are disordered; the sequence is VRGVAMNPVDHPMGGGEGKSSGGRHPCSPWGQQSKGVRTRNNKRTDQFIVKRRSK.

This sequence belongs to the universal ribosomal protein uL2 family. In terms of assembly, part of the 50S ribosomal subunit. Forms a bridge to the 30S subunit in the 70S ribosome.

One of the primary rRNA binding proteins. Required for association of the 30S and 50S subunits to form the 70S ribosome, for tRNA binding and peptide bond formation. It has been suggested to have peptidyltransferase activity; this is somewhat controversial. Makes several contacts with the 16S rRNA in the 70S ribosome. The chain is Large ribosomal subunit protein uL2 from Desulfosudis oleivorans (strain DSM 6200 / JCM 39069 / Hxd3) (Desulfococcus oleovorans).